A 404-amino-acid chain; its full sequence is Type I restriction enzyme EcoR124I/EcoR124II specificity subunit (404 aa).

A target-recognition domain 1 region spans residues 1–153 (MSEMSYLEKL…PIPCPDNPEK (153 aa)). Positions 154–199 (SLAIQSEIVRILDKFTALTAELTAELNMRKKQYNYYRDQLLSFKEG) are conserved region 1. The tract at residues 200 to 349 (EVEWKTLGEI…KLFSFKIPVP (150 aa)) is target-recognition domain 2. The conserved region 2 stretch occupies residues 350–404 (NINEQQRIVEILDKFDTLTNSITEGLPREIELRQKQYEYYRDLLFSFPKPETVSN).

The protein belongs to the type-I restriction system S methylase family. As to quaternary structure, the type I restriction/modification system is composed of three polypeptides R, M and S; the restriction enzyme has stoichiometry R(2)M(2)S(1) while the methyltransferase is M(2)S(1). There is an equilibrium between R(2)M(2)S(1) and R(1)M(2)S(1); the latter is methylation and translocation proficient but restriction deficient. (Microbial infection) Holoenenzyme interacts with Escherichia phage T7 protein Ocr; this interaction leads to the inhibition of the restriction activity, but may still allow methylation and translocation.

The specificity (S) subunit of a type I restriction enzyme; this subunit dictates DNA sequence specificity. The presence or absence of a 4-residue repeat changes the sequence specificity; a third copy of TAEL inserted at position 179-180 changes the recognition site from 5'-GAAN(6)RTCG-3' (for EcoR124I) to 5'-GAAN(7)RTCG-3' (for EcoR124II). The M and S subunits together form a methyltransferase (MTase) that methylates A-3 on the top and bottom strand of the sequence 5'-GAAN(7)RTCG-3'. In the presence of the R subunit the complex can also act as an endonuclease, binding to the same target sequence but cutting the DNA some distance from this site. Whether the DNA is cut or modified depends on the methylation state of the target sequence. When the target site is unmodified, the DNA is cut. When the target site is hemimethylated, the complex acts as a maintenance MTase modifying the DNA so that both strands become methylated. After locating a non-methylated recognition site, the enzyme complex serves as a molecular motor that translocates DNA in an ATP-dependent manner until a collision occurs that triggers cleavage. The R(1)M(2)S(1) complex translocates an average of 555 bp/second on nicked DNA; the R(2)M(2)S(1) complex translocates at double that speed. The 2 R subunit motors are independent and track along the helical pitch of the DNA, inducing positive supercoiling ahead of themselves. The protein is Type I restriction enzyme EcoR124I/EcoR124II specificity subunit (hsdS) of Escherichia coli.